The chain runs to 125 residues: NADPH-dependent 7-cyano-7-deazaguanine reductase (125 aa).

The Thioimide intermediate role is filled by Cys-40. Asp-47 serves as the catalytic Proton donor. Substrate is bound by residues 62–64 (LET) and 81–82 (HE).

The protein belongs to the GTP cyclohydrolase I family. QueF type 1 subfamily.

The protein localises to the cytoplasm. The enzyme catalyses 7-aminomethyl-7-carbaguanine + 2 NADP(+) = 7-cyano-7-deazaguanine + 2 NADPH + 3 H(+). It participates in tRNA modification; tRNA-queuosine biosynthesis. Functionally, catalyzes the NADPH-dependent reduction of 7-cyano-7-deazaguanine (preQ0) to 7-aminomethyl-7-deazaguanine (preQ1). This is NADPH-dependent 7-cyano-7-deazaguanine reductase from Frankia casuarinae (strain DSM 45818 / CECT 9043 / HFP020203 / CcI3).